The following is a 102-amino-acid chain: Small ribosomal subunit protein uS10 (102 aa).

It belongs to the universal ribosomal protein uS10 family. As to quaternary structure, part of the 30S ribosomal subunit.

Functionally, involved in the binding of tRNA to the ribosomes. The protein is Small ribosomal subunit protein uS10 of Geobacillus kaustophilus (strain HTA426).